The chain runs to 181 residues: Oligoribonuclease (181 aa).

The region spanning leucine 8 to leucine 171 is the Exonuclease domain. Residue tyrosine 129 is part of the active site.

This sequence belongs to the oligoribonuclease family.

The protein resides in the cytoplasm. Its function is as follows. 3'-to-5' exoribonuclease specific for small oligoribonucleotides. The sequence is that of Oligoribonuclease from Shewanella oneidensis (strain ATCC 700550 / JCM 31522 / CIP 106686 / LMG 19005 / NCIMB 14063 / MR-1).